Here is a 584-residue protein sequence, read N- to C-terminus: BEL1-like homeodomain protein 8 (584 aa).

The segment at 266-282 (SRFLEPAQKMLEEFCIS) is SR/KY domain. Residues 292–317 (ESTSMEDDDDDDDNLSGFSSSSEPLE) form a disordered region. Residues 295–305 (SMEDDDDDDDN) are compositionally biased toward acidic residues. Residues 316–387 (LEPKNRLKKA…ALRTAIAEHV (72 aa)) are BELL domain. The homeobox DNA-binding region spans 424–486 (IWRPQRGLPE…NARVRLWKPM (63 aa)). The interval 503–529 (TSHNIEPSNRPNTVSSPSHEQTLTGLS) is disordered.

The protein belongs to the TALE/BELL homeobox family. As to quaternary structure, may form heterodimeric complex with the TALE/KNOX proteins STM and KNAT1/BP.

The protein localises to the nucleus. Functionally, required for specifying floral primordia and establishing early internode patterning events during inflorescence development. In Arabidopsis thaliana (Mouse-ear cress), this protein is BEL1-like homeodomain protein 8 (BLH8).